The following is a 123-amino-acid chain: Alpha-lactalbumin A (123 aa).

In terms of domain architecture, C-type lysozyme spans 1 to 123 (KQFTKCELSQ…KLEQWLCEEL (123 aa)). 4 disulfide bridges follow: Cys-6–Cys-120, Cys-28–Cys-111, Cys-61–Cys-77, and Cys-73–Cys-91. Ca(2+)-binding residues include Lys-79, Asp-82, Asp-84, Asp-87, and Asp-88.

This sequence belongs to the glycosyl hydrolase 22 family. As to quaternary structure, lactose synthase (LS) is a heterodimer of a catalytic component, beta1,4-galactosyltransferase (beta4Gal-T1) and a regulatory component, alpha-lactalbumin (LA). In terms of tissue distribution, mammary gland specific. Secreted in milk.

Its subcellular location is the secreted. In terms of biological role, regulatory subunit of lactose synthase, changes the substrate specificity of galactosyltransferase in the mammary gland making glucose a good acceptor substrate for this enzyme. This enables LS to synthesize lactose, the major carbohydrate component of milk. In other tissues, galactosyltransferase transfers galactose onto the N-acetylglucosamine of the oligosaccharide chains in glycoproteins. The protein is Alpha-lactalbumin A of Equus caballus (Horse).